Consider the following 448-residue polypeptide: N-succinylarginine dihydrolase (448 aa).

Substrate is bound by residues 19 to 28 (GGLSYGNVAS), asparagine 110, and 137 to 138 (HR). Glutamate 174 is an active-site residue. Arginine 214 provides a ligand contact to substrate. The active site involves histidine 250. Residues aspartate 252 and asparagine 365 each contribute to the substrate site. The active-site Nucleophile is cysteine 371.

Belongs to the succinylarginine dihydrolase family. In terms of assembly, homodimer.

It carries out the reaction N(2)-succinyl-L-arginine + 2 H2O + 2 H(+) = N(2)-succinyl-L-ornithine + 2 NH4(+) + CO2. Its pathway is amino-acid degradation; L-arginine degradation via AST pathway; L-glutamate and succinate from L-arginine: step 2/5. Functionally, catalyzes the hydrolysis of N(2)-succinylarginine into N(2)-succinylornithine, ammonia and CO(2). The sequence is that of N-succinylarginine dihydrolase from Pseudomonas savastanoi pv. phaseolicola (strain 1448A / Race 6) (Pseudomonas syringae pv. phaseolicola (strain 1448A / Race 6)).